A 510-amino-acid polypeptide reads, in one-letter code: MPLSLGAEMWGPAAWLLLLLLLASFTGQRLAGELETSDLVTVVLGQDAKLPCFYRGDPGEQVEHVAWARVDAGEGGRELALLNSKYGLHVSSAYEGRVEQPPPPRNPLDGAVLLRNAVHADEGEYECRVSTFPAGSFQARLRLRVLVPPLPSLNPGPPLEEGQGLTLAASCTAEGSPAPSVTWDTEVKGTASHRSFTHSRSAAVTSEFHLVPSRSMNGQPLTCVVSHPGLLQDQRITHILQVAFLAEASVRGLEDRKLWQVGREGAMLKCLSEGQPPPSYNWTRLDGPLPSGVRAEGDTLGFPTLTPEHSGTYVCRVSNALSSRDSQVVVDVLDPEDAPGKQVDLVSASVVVVGVIAALLFCLLVVVVVLMSRYHRRKAQQMTQKYEEELTLTRENSIRRLHSHHSDPRNQPEESVGLRAEGHPDSLKDNSSCSVMSEEPEGRSYSTLTTVREIETQTELPSPGPGRAEEEEDRDEGIKQAMNHFVQENGTLRAKPTGNGIYINGRGHLV.

The first 31 residues, 1–31 (MPLSLGAEMWGPAAWLLLLLLLASFTGQRLA), serve as a signal peptide directing secretion. Residues 32–144 (GELETSDLVT…GSFQARLRLR (113 aa)) enclose the Ig-like V-type domain. The Extracellular segment spans residues 32–349 (GELETSDLVT…GKQVDLVSAS (318 aa)). 3 disulfides stabilise this stretch: Cys52–Cys127, Cys171–Cys223, and Cys270–Cys315. 2 Ig-like C2-type domains span residues 148-237 (PPLP…QRIT) and 248-331 (ASVR…VVVD). Residue Asn281 is glycosylated (N-linked (GlcNAc...) asparagine). Residues 350–370 (VVVVGVIAALLFCLLVVVVVL) form a helical membrane-spanning segment. Residues 371–510 (MSRYHRRKAQ…IYINGRGHLV (140 aa)) are Cytoplasmic-facing. Over residues 400 to 412 (RLHSHHSDPRNQP) the composition is skewed to basic and acidic residues. A disordered region spans residues 400-475 (RLHSHHSDPR…GRAEEEEDRD (76 aa)).

It belongs to the nectin family. In terms of assembly, self-associates. Interacts via its Ig-like V-type domain with NECTIN1 Ig-like V-type domain. Interacts via its C-terminus with AFDN. Interacts with TIGIT.

It is found in the cell membrane. The protein localises to the cell junction. The protein resides in the adherens junction. Its function is as follows. Seems to be involved in cell adhesion through trans-homophilic and -heterophilic interactions, the latter including specifically interactions with NECTIN1. Plays a role in the senescence-associated cell size enlargement via SFK/PI3K/Rac1 and thus promotes senescent cell survival. Also participates in the innate immune response by acting as a ligand for the receptor TIGIT to inhibit NK-cell activity. This chain is Nectin-4, found in Bos taurus (Bovine).